A 440-amino-acid polypeptide reads, in one-letter code: Gamma-aminobutyric acid receptor subunit pi (440 aa).

A signal peptide spans 1–23 (MKRSLHLTFVCLSLFSARMCVQG). Topologically, residues 24–241 (NQFNIEVSRS…LVLQFELQRN (218 aa)) are extracellular. Asparagine 43, asparagine 102, and asparagine 145 each carry an N-linked (GlcNAc...) asparagine glycan. The cysteines at positions 160 and 174 are disulfide-linked. N-linked (GlcNAc...) asparagine glycans are attached at residues asparagine 196 and asparagine 228. Residues 242 to 262 (VLYFILETYVPSTFLVVLSWV) traverse the membrane as a helical segment. The Cytoplasmic segment spans residues 263 to 270 (SFWISLDS). A helical membrane pass occupies residues 271-290 (VPARTCIGVTTVLSMTTLMI). Residues 291–301 (GSRTSLPNTNC) lie on the Extracellular side of the membrane. Residues 302 to 322 (FIKAIDVYLGICFSFVFGALL) form a helical membrane-spanning segment. Over 323–419 (EYAVAHYSSL…NPSNVDRYSK (97 aa)) the chain is Cytoplasmic. Residues 420–440 (LLFPLIFMLANVFYWAYYMYF) form a helical membrane-spanning segment.

Belongs to the ligand-gated ion channel (TC 1.A.9) family. Gamma-aminobutyric acid receptor (TC 1.A.9.5) subfamily. GABRP sub-subfamily. In terms of assembly, heteropentamer, formed by a combination of alpha (GABRA1-6), beta (GABRB1-3), gamma (GABRG1-3), delta (GABRD), epsilon (GABRE), rho (GABRR1-3), pi (GABRP) and theta (GABRQ) chains, each subunit exhibiting distinct physiological and pharmacological properties.

The protein resides in the cell membrane. It localises to the apical cell membrane. The enzyme catalyses chloride(in) = chloride(out). In terms of biological role, pi subunit of the heteropentameric ligand-gated chloride channel gated by gamma-aminobutyric acid (GABA). GABA-gated chloride channels, also named GABA(A) receptors (GABAAR), consist of five subunits arranged around a central pore and contain GABA active binding site(s) located at the alpha and beta subunit interfaces. When activated by GABA, GABAARs selectively allow the flow of chloride anions across the cell membrane down their electrochemical gradient. Pi-containing GABAARs are mostly located in peripheral tissues. In the uterus, pi subunits modulate uterus contraction by altering the sensitivity of GABAARs to pregnanolone. In the lungs, pi-containing GABAARs contribute to pulmonary fluid transport via luminal secretion of chloride. The sequence is that of Gamma-aminobutyric acid receptor subunit pi (GABRP) from Bos taurus (Bovine).